The chain runs to 470 residues: MTGKTLYDKLWDAHVVRTEPDGTALLYIDRHLVHEVTSPQAFEGLRLAGRKPWRTDTVLAVPDHNVPTTHRDQGISDPVSRIQVETLDANVHEFGITFFPMNDVRQGIVHVIGPEQGATLPGMTVVCGDSHTSTHGAFGALAFGIGTSEVEHVLATQCLLQKKMKNMLVSVDGRVGPGVTAKDIVLAIIGEIGTAGGTGYAIEFGGEAIRDLSMEGRMTVCNMAIEAGARAGMVAVDETTIEYVKGRTYAPTGEQWESAVAAWRELNSDADARFDRVVRLDATAIAPQVSWGTSPEMVVPVTGRVPDPAEATDPVKASGMKRALEYMGLAANTPIEQIAIDKVFIGSCTNSRIEDLRAAAAVVRGRKVAGNVKLAMVVPGSGLVKQQAEQEGLDQVFLEAGFEWREPGCSMCLAMNADRLEPGERCASTSNRNFEGRQGQGGRTHLVSPAMAAAAAVTGHFTDVRQLAQS.

Positions 348, 409, and 412 each coordinate [4Fe-4S] cluster.

It belongs to the aconitase/IPM isomerase family. LeuC type 1 subfamily. In terms of assembly, heterodimer of LeuC and LeuD. It depends on [4Fe-4S] cluster as a cofactor.

It carries out the reaction (2R,3S)-3-isopropylmalate = (2S)-2-isopropylmalate. The protein operates within amino-acid biosynthesis; L-leucine biosynthesis; L-leucine from 3-methyl-2-oxobutanoate: step 2/4. In terms of biological role, catalyzes the isomerization between 2-isopropylmalate and 3-isopropylmalate, via the formation of 2-isopropylmaleate. The chain is 3-isopropylmalate dehydratase large subunit from Thioalkalivibrio sulfidiphilus (strain HL-EbGR7).